We begin with the raw amino-acid sequence, 209 residues long: Eukaryotic translation initiation factor 4E (209 aa).

Residues 51–52 (WH), 97–98 (WE), and 153–158 (RKQAYR) contribute to the mRNA site.

This sequence belongs to the eukaryotic initiation factor 4E family. In terms of assembly, eIF4F is a multi-subunit complex, the composition of which varies with external and internal environmental conditions. It is composed of at least eIF4A, eIF4E and eIF4G. eIF4E is also known to interact with other partners.

In terms of biological role, recognizes and binds the 7-methylguanosine-containing mRNA cap during an early step in the initiation of protein synthesis and facilitates ribosome binding by inducing the unwinding of the mRNAs secondary structures. This Candida albicans (strain SC5314 / ATCC MYA-2876) (Yeast) protein is Eukaryotic translation initiation factor 4E (TIF45).